We begin with the raw amino-acid sequence, 352 residues long: MTDQSSSNSPSLSYKDAGVDIDAGNDLVERIKSVAKRTRRPEVMAGLGGFGALFELPSGYNQPVLVSGTDGVGTKLKLAMQLNKHDTIGIDLVAMCVNDLIVGGAEPLFFLDYYATGKLSVDIAAQVVEGIGNGCELAGCSLVGGETAEMPGMYEGDDYDLAGFCVGIVEKAKIIDGSKVATGDTLIGLPSSGPHSNGYSLIRKILEVSNADLNEDVGGKPLREALMEPTRIYVKTLLALFAELDVKALSHITGGGLTENIPRVLPDNAKAVIDCASWEFPPVFSWLQQRGNVADTEMYRTFNCGVGMVICVSANDAERAISFLSDAGEAPFVIGQIEPLAAGEEQVELRRN.

This sequence belongs to the AIR synthase family.

Its subcellular location is the cytoplasm. It catalyses the reaction 2-formamido-N(1)-(5-O-phospho-beta-D-ribosyl)acetamidine + ATP = 5-amino-1-(5-phospho-beta-D-ribosyl)imidazole + ADP + phosphate + H(+). The protein operates within purine metabolism; IMP biosynthesis via de novo pathway; 5-amino-1-(5-phospho-D-ribosyl)imidazole from N(2)-formyl-N(1)-(5-phospho-D-ribosyl)glycinamide: step 2/2. The polypeptide is Phosphoribosylformylglycinamidine cyclo-ligase (Teredinibacter turnerae (strain ATCC 39867 / T7901)).